The following is a 702-amino-acid chain: MSTDAELQTISGLSVASKSAPSTQTEGVTASGKVESTTNAEEATSDVEEEENPLVVAARDGNTAEVKRLCESGSYSVLDTAEDGVTALHWAAVNNRISTCQYLVEQGAVVDAKGGQLNGTPLHWACRRGLVYIVHYLIQNGADPLRSDVQGYNALHLATHSSNVMLLVYLLHQGLPVDCQDPNGRTALHWAAYQGDALSVDVLLRWGSDVKITDTQGFLPLHWGIVNGSRNSLARLIEEGSDMYAKSSDGKTPHVMAAEMNTTAQLEGALDDCGRFPDGSQKTKYFDARTTNLLCFFTPFILILLGLVLCTFCGPIFGIILTVATLFGSIKLLKTLVLPSLYNGHAALLKSPFQAGIFTGSAFWVTVKYLTSVLPATFASHPILNFFFASIFGLAMYCFFRCMSMDPGYIPKLSGITEQKEVIETLIERGEFDTRHFCFVTYVRKPLRSKFCRQSKRVVARFDHFCPWVWNAIGVRNHRMFVLYVLFLQIGIPLWLALNSAYFGELLEIKRWDPLEFYLVIWISLQLIWITFLSFVQIFQICRSLTTSEAVNLQKYGYMGADDYSSVPLDHSAATASAKSVMNAHGHAAKSPCFSSVLKLLGVDQFVATAGEAIKHRDNRSWKEKNPTDSGAGTNCFDFWFPNGKFDLLAVFEAGKGGGAIGGHAVDYYKLWDFPDVSPNQQQTNNRSTREDGEALLAESQV.

Residues 1-40 (MSTDAELQTISGLSVASKSAPSTQTEGVTASGKVESTTNA) show a composition bias toward polar residues. The segment at 1-51 (MSTDAELQTISGLSVASKSAPSTQTEGVTASGKVESTTNAEEATSDVEEEE) is disordered. The Cytoplasmic segment spans residues 1-299 (MSTDAELQTI…TTNLLCFFTP (299 aa)). ANK repeat units lie at residues 49–80 (EEEN…VLDT), 83–112 (DGVT…VVDA), 117–147 (LNGT…PLRS), 150–179 (QGYN…PVDC), 183–212 (NGRT…DVKI), and 216–245 (QGFL…DMYA). 2 consecutive transmembrane segments (helical) span residues 300–320 (FILI…FGII) and 321–341 (LTVA…LPSL). Over 342–354 (YNGHAALLKSPFQ) the chain is Cytoplasmic. The helical transmembrane segment at 355 to 375 (AGIFTGSAFWVTVKYLTSVLP) threads the bilayer. Residues 376–379 (ATFA) are Lumenal-facing. A helical membrane pass occupies residues 380–400 (SHPILNFFFASIFGLAMYCFF). Residues 401–479 (RCMSMDPGYI…WNAIGVRNHR (79 aa)) lie on the Cytoplasmic side of the membrane. A DHHC domain is found at 436–486 (HFCFVTYVRKPLRSKFCRQSKRVVARFDHFCPWVWNAIGVRNHRMFVLYVL). Cys466 serves as the catalytic S-palmitoyl cysteine intermediate. A helical transmembrane segment spans residues 480–500 (MFVLYVLFLQIGIPLWLALNS). Topologically, residues 501–518 (AYFGELLEIKRWDPLEFY) are lumenal. Residues 519 to 539 (LVIWISLQLIWITFLSFVQIF) form a helical membrane-spanning segment. Residues 540 to 702 (QICRSLTTSE…GEALLAESQV (163 aa)) are Cytoplasmic-facing. The disordered stretch occupies residues 679 to 702 (PNQQQTNNRSTREDGEALLAESQV).

Belongs to the DHHC palmitoyltransferase family. AKR/ZDHHC17 subfamily.

It is found in the early endosome membrane. The protein localises to the golgi apparatus membrane. It catalyses the reaction L-cysteinyl-[protein] + hexadecanoyl-CoA = S-hexadecanoyl-L-cysteinyl-[protein] + CoA. Its function is as follows. Palmitoyltransferase specific for casein kinase 1. The protein is Palmitoyltransferase AKR1 (AKR1) of Yarrowia lipolytica (strain CLIB 122 / E 150) (Yeast).